A 205-amino-acid polypeptide reads, in one-letter code: Glycerol-3-phosphate acyltransferase (205 aa).

Residues 1–3 lie on the Periplasmic side of the membrane; that stretch reads MSA. Residues 4–24 traverse the membrane as a helical segment; sequence IAPGMILFAYLCGSISSAILV. At 25–52 the chain is on the cytoplasmic side; that stretch reads CRIAGLPDPRESGSGNPGATNVLRIGGK. Residues 53 to 73 traverse the membrane as a helical segment; the sequence is GAAVAVLIFDILKGMLPVWGA. Residues 74–80 lie on the Periplasmic side of the membrane; it reads YALGITP. A helical transmembrane segment spans residues 81–101; that stretch reads FWLGLIAIAACLGHIWPVFFG. The Cytoplasmic portion of the chain corresponds to 102–111; the sequence is FKGGKGVATA. A helical membrane pass occupies residues 112 to 132; it reads FGAIAPIGWDLTGVIAGTWLL. The Periplasmic segment spans residues 133–137; sequence TVLLS. The helical transmembrane segment at 138 to 158 threads the bilayer; it reads GYSSLGAIVSALIAPFYVWWF. Topologically, residues 159 to 205 are cytoplasmic; the sequence is KPQFTFPVSMLSCLILLRHHDNIQRLWRRQETKIWTKLKKKREKESK.

The protein belongs to the PlsY family. Probably interacts with PlsX.

It is found in the cell inner membrane. The catalysed reaction is sn-glycerol 3-phosphate + an acyl-CoA = a 1-acyl-sn-glycero-3-phosphate + CoA. The enzyme catalyses a fatty acyl-[ACP] + sn-glycerol 3-phosphate = a 1-acyl-sn-glycero-3-phosphate + holo-[ACP]. It functions in the pathway lipid metabolism; phospholipid metabolism. Functionally, catalyzes the transfer of an acyl group from acyl-ACP to glycerol-3-phosphate (G3P) to form lysophosphatidic acid (LPA). This enzyme can also utilize acyl-CoA as fatty acyl donor, but not acyl-PO(4). The chain is Glycerol-3-phosphate acyltransferase from Salmonella arizonae (strain ATCC BAA-731 / CDC346-86 / RSK2980).